A 274-amino-acid polypeptide reads, in one-letter code: 2,3,4,5-tetrahydropyridine-2,6-dicarboxylate N-succinyltransferase (274 aa).

Arg105 and Asp142 together coordinate substrate.

This sequence belongs to the transferase hexapeptide repeat family. In terms of assembly, homotrimer.

Its subcellular location is the cytoplasm. The catalysed reaction is (S)-2,3,4,5-tetrahydrodipicolinate + succinyl-CoA + H2O = (S)-2-succinylamino-6-oxoheptanedioate + CoA. The protein operates within amino-acid biosynthesis; L-lysine biosynthesis via DAP pathway; LL-2,6-diaminopimelate from (S)-tetrahydrodipicolinate (succinylase route): step 1/3. In Thiobacillus denitrificans (strain ATCC 25259 / T1), this protein is 2,3,4,5-tetrahydropyridine-2,6-dicarboxylate N-succinyltransferase.